A 429-amino-acid chain; its full sequence is Adenylosuccinate synthetase (429 aa).

Residues 12-18 (GDEGKGK) and 40-42 (GHT) contribute to the GTP site. The active-site Proton acceptor is the Asp-13. Residues Asp-13 and Gly-40 each coordinate Mg(2+). IMP-binding positions include 13–16 (DEGK), 38–41 (NAGH), Thr-128, Arg-142, Gln-223, Thr-238, and Arg-302. The active-site Proton donor is the His-41. 298-304 (VNTGRPR) lines the substrate pocket. GTP-binding positions include Arg-304, 330–332 (KLD), and 412–414 (GVG).

This sequence belongs to the adenylosuccinate synthetase family. In terms of assembly, homodimer. Mg(2+) serves as cofactor.

It is found in the cytoplasm. It catalyses the reaction IMP + L-aspartate + GTP = N(6)-(1,2-dicarboxyethyl)-AMP + GDP + phosphate + 2 H(+). The protein operates within purine metabolism; AMP biosynthesis via de novo pathway; AMP from IMP: step 1/2. Its function is as follows. Plays an important role in the de novo pathway of purine nucleotide biosynthesis. Catalyzes the first committed step in the biosynthesis of AMP from IMP. In Micrococcus luteus (strain ATCC 4698 / DSM 20030 / JCM 1464 / CCM 169 / CCUG 5858 / IAM 1056 / NBRC 3333 / NCIMB 9278 / NCTC 2665 / VKM Ac-2230) (Micrococcus lysodeikticus), this protein is Adenylosuccinate synthetase.